Consider the following 322-residue polypeptide: Lipoyl synthase (322 aa).

7 residues coordinate [4Fe-4S] cluster: Cys66, Cys71, Cys77, Cys92, Cys96, Cys99, and Ser306. Positions Phe78–Ser295 constitute a Radical SAM core domain.

Belongs to the radical SAM superfamily. Lipoyl synthase family. Requires [4Fe-4S] cluster as cofactor.

Its subcellular location is the cytoplasm. The catalysed reaction is [[Fe-S] cluster scaffold protein carrying a second [4Fe-4S](2+) cluster] + N(6)-octanoyl-L-lysyl-[protein] + 2 oxidized [2Fe-2S]-[ferredoxin] + 2 S-adenosyl-L-methionine + 4 H(+) = [[Fe-S] cluster scaffold protein] + N(6)-[(R)-dihydrolipoyl]-L-lysyl-[protein] + 4 Fe(3+) + 2 hydrogen sulfide + 2 5'-deoxyadenosine + 2 L-methionine + 2 reduced [2Fe-2S]-[ferredoxin]. It functions in the pathway protein modification; protein lipoylation via endogenous pathway; protein N(6)-(lipoyl)lysine from octanoyl-[acyl-carrier-protein]: step 2/2. In terms of biological role, catalyzes the radical-mediated insertion of two sulfur atoms into the C-6 and C-8 positions of the octanoyl moiety bound to the lipoyl domains of lipoate-dependent enzymes, thereby converting the octanoylated domains into lipoylated derivatives. The chain is Lipoyl synthase from Neisseria meningitidis serogroup C (strain 053442).